The primary structure comprises 276 residues: 4-hydroxy-tetrahydrodipicolinate reductase (276 aa).

NAD(+) contacts are provided by residues 18-23 (GASGRM) and Asp44. NADP(+) is bound at residue Arg45. NAD(+) is bound by residues 107–109 (GTT) and 131–134 (APNM). The Proton donor/acceptor role is filled by His164. His165 contacts (S)-2,3,4,5-tetrahydrodipicolinate. The Proton donor role is filled by Lys168. 174-175 (GT) provides a ligand contact to (S)-2,3,4,5-tetrahydrodipicolinate.

It belongs to the DapB family.

Its subcellular location is the cytoplasm. It carries out the reaction (S)-2,3,4,5-tetrahydrodipicolinate + NAD(+) + H2O = (2S,4S)-4-hydroxy-2,3,4,5-tetrahydrodipicolinate + NADH + H(+). The catalysed reaction is (S)-2,3,4,5-tetrahydrodipicolinate + NADP(+) + H2O = (2S,4S)-4-hydroxy-2,3,4,5-tetrahydrodipicolinate + NADPH + H(+). Its pathway is amino-acid biosynthesis; L-lysine biosynthesis via DAP pathway; (S)-tetrahydrodipicolinate from L-aspartate: step 4/4. Catalyzes the conversion of 4-hydroxy-tetrahydrodipicolinate (HTPA) to tetrahydrodipicolinate. The polypeptide is 4-hydroxy-tetrahydrodipicolinate reductase (Aromatoleum aromaticum (strain DSM 19018 / LMG 30748 / EbN1) (Azoarcus sp. (strain EbN1))).